The sequence spans 263 residues: 3'-5' ssDNA/RNA exonuclease TatD (263 aa).

Positions 91, 127, and 152 each coordinate a divalent metal cation.

Belongs to the metallo-dependent hydrolases superfamily. TatD-type hydrolase family. TatD subfamily. Monomer. Requires Mg(2+) as cofactor.

The protein localises to the cytoplasm. Its function is as follows. 3'-5' exonuclease that prefers single-stranded DNA and RNA. May play a role in the H(2)O(2)-induced DNA damage repair. The sequence is that of 3'-5' ssDNA/RNA exonuclease TatD from Citrobacter rodentium (strain ICC168) (Citrobacter freundii biotype 4280).